The chain runs to 129 residues: L-ectoine synthase (129 aa).

Belongs to the ectoine synthase family.

It carries out the reaction (2S)-4-acetamido-2-aminobutanoate = L-ectoine + H2O. The protein operates within amine and polyamine biosynthesis; ectoine biosynthesis; L-ectoine from L-aspartate 4-semialdehyde: step 3/3. In terms of biological role, catalyzes the circularization of gamma-N-acetyl-alpha,gamma-diaminobutyric acid (ADABA) to ectoine (1,4,5,6-tetrahydro-2-methyl-4-pyrimidine carboxylic acid), which is an excellent osmoprotectant. The chain is L-ectoine synthase from Halalkalibacterium halodurans (strain ATCC BAA-125 / DSM 18197 / FERM 7344 / JCM 9153 / C-125) (Bacillus halodurans).